Reading from the N-terminus, the 331-residue chain is UPF0194 membrane protein Ent638_1286 (331 aa).

A signal peptide spans 1–16; it reads MKKPVVVILAVVVLLA. A coiled-coil region spans residues 107-208; it reads EEVAQAEAAV…LDLHDTTLIA (102 aa).

The protein belongs to the UPF0194 family.

The protein resides in the periplasm. The chain is UPF0194 membrane protein Ent638_1286 from Enterobacter sp. (strain 638).